A 374-amino-acid polypeptide reads, in one-letter code: Putative glutamate--cysteine ligase 2-2 (374 aa).

Belongs to the glutamate--cysteine ligase type 2 family. YbdK subfamily.

It catalyses the reaction L-cysteine + L-glutamate + ATP = gamma-L-glutamyl-L-cysteine + ADP + phosphate + H(+). Its function is as follows. ATP-dependent carboxylate-amine ligase which exhibits weak glutamate--cysteine ligase activity. In Rhodococcus jostii (strain RHA1), this protein is Putative glutamate--cysteine ligase 2-2.